The chain runs to 141 residues: MAKKIVAVIKLALQAGKANPAPPVGPALGQHGVNIMAFCKEYNARTQDKAGFVIPVEISVFEDRSFTFITKTPPASVLITKAAGIEKGSGESAKGSVGNISKAQLEEIAKTKLPDLNCSSVESAMKVIEGTARNMGVSITD.

The protein belongs to the universal ribosomal protein uL11 family. Part of the ribosomal stalk of the 50S ribosomal subunit. Interacts with L10 and the large rRNA to form the base of the stalk. L10 forms an elongated spine to which L12 dimers bind in a sequential fashion forming a multimeric L10(L12)X complex. One or more lysine residues are methylated.

Its function is as follows. Forms part of the ribosomal stalk which helps the ribosome interact with GTP-bound translation factors. The sequence is that of Large ribosomal subunit protein uL11 from Prochlorococcus marinus (strain MIT 9215).